The following is a 390-amino-acid chain: MKFVDEASILVVAGDGGNGCVSFRREKYIPKGGPDGGDGGDGGDVWMEADENLNTLIDYRFEKSFRAERGQNGASRDCTGKRGKDVTIKVPVGTRVIDQGTGETMGDMTKHGQRLLVAKGGWHGLGNTRFKSSVNRTPRQKTNGTPGDKRDLLLELMLLADVGMLGMPNAGKSTFIRAVSAAKPKVADYPFTTLVPSLGVVRMDSEKSFVVADIPGLIEGAAEGAGLGIRFLKHLERCRVLLHLIDIDPIDGSDPVENARIIIGELEKYSQDLAAKPRWLVFNKIDLMDKTEAEEKAKAIAEALGWEGKYYLISAASQLGVKDLCWDVMTFIIENPIAQAEEAKQPEKVEFMWDDYHRQQLAEVEEDADDDWDDDWDEDDEEGVEFIYKR.

Residues 1–159 (MKFVDEASIL…RDLLLELMLL (159 aa)) enclose the Obg domain. A disordered region spans residues 127–147 (NTRFKSSVNRTPRQKTNGTPG). A compositionally biased stretch (polar residues) spans 129–145 (RFKSSVNRTPRQKTNGT). Residues 160-333 (ADVGMLGMPN…LCWDVMTFII (174 aa)) enclose the OBG-type G domain. GTP contacts are provided by residues 166–173 (GMPNAGKS), 191–195 (FTTLV), 213–216 (DIPG), 283–286 (NKID), and 314–316 (SAA). Mg(2+) is bound by residues serine 173 and threonine 193.

This sequence belongs to the TRAFAC class OBG-HflX-like GTPase superfamily. OBG GTPase family. Monomer. The cofactor is Mg(2+).

It is found in the cytoplasm. In terms of biological role, an essential GTPase which binds GTP, GDP and possibly (p)ppGpp with moderate affinity, with high nucleotide exchange rates and a fairly low GTP hydrolysis rate. Plays a role in control of the cell cycle, stress response, ribosome biogenesis and in those bacteria that undergo differentiation, in morphogenesis control. The polypeptide is GTPase Obg (Salmonella paratyphi A (strain ATCC 9150 / SARB42)).